Reading from the N-terminus, the 205-residue chain is Imidazole glycerol phosphate synthase subunit HisH (205 aa).

The region spanning 6–205 (RVGIIDHGSG…LLTRWLNQLS (200 aa)) is the Glutamine amidotransferase type-1 domain. The Nucleophile role is filled by Cys84. Active-site residues include His185 and Glu187.

Heterodimer of HisH and HisF.

The protein localises to the cytoplasm. The catalysed reaction is 5-[(5-phospho-1-deoxy-D-ribulos-1-ylimino)methylamino]-1-(5-phospho-beta-D-ribosyl)imidazole-4-carboxamide + L-glutamine = D-erythro-1-(imidazol-4-yl)glycerol 3-phosphate + 5-amino-1-(5-phospho-beta-D-ribosyl)imidazole-4-carboxamide + L-glutamate + H(+). It catalyses the reaction L-glutamine + H2O = L-glutamate + NH4(+). It functions in the pathway amino-acid biosynthesis; L-histidine biosynthesis; L-histidine from 5-phospho-alpha-D-ribose 1-diphosphate: step 5/9. IGPS catalyzes the conversion of PRFAR and glutamine to IGP, AICAR and glutamate. The HisH subunit catalyzes the hydrolysis of glutamine to glutamate and ammonia as part of the synthesis of IGP and AICAR. The resulting ammonia molecule is channeled to the active site of HisF. This is Imidazole glycerol phosphate synthase subunit HisH from Cutibacterium acnes (strain DSM 16379 / KPA171202) (Propionibacterium acnes).